Reading from the N-terminus, the 295-residue chain is Protoheme IX farnesyltransferase (295 aa).

The next 9 membrane-spanning stretches (helical) occupy residues 8 to 28 (VTKP…FLLA), 35 to 55 (YPLF…GCVF), 74 to 94 (VLVK…VLGI), 98 to 118 (LLLY…GFVI), 132 to 152 (VYGT…GYCA), 162 to 182 (LILL…IAIF), 208 to 228 (ITLY…SGYA), 233 to 253 (LVVA…GYKA), and 264 to 284 (FVFS…DFNV).

This sequence belongs to the UbiA prenyltransferase family. Protoheme IX farnesyltransferase subfamily.

The protein localises to the cell inner membrane. It catalyses the reaction heme b + (2E,6E)-farnesyl diphosphate + H2O = Fe(II)-heme o + diphosphate. The protein operates within porphyrin-containing compound metabolism; heme O biosynthesis; heme O from protoheme: step 1/1. Converts heme B (protoheme IX) to heme O by substitution of the vinyl group on carbon 2 of heme B porphyrin ring with a hydroxyethyl farnesyl side group. This chain is Protoheme IX farnesyltransferase, found in Yersinia pseudotuberculosis serotype O:1b (strain IP 31758).